The primary structure comprises 303 residues: Oxygen-dependent coproporphyrinogen-III oxidase (303 aa).

Serine 93 is a substrate binding site. A divalent metal cation is bound by residues histidine 97 and histidine 107. The active-site Proton donor is the histidine 107. Residue 109 to 111 participates in substrate binding; that stretch reads NVR. A divalent metal cation is bound by residues histidine 149 and histidine 179. The tract at residues 244–279 is important for dimerization; that stretch reads YVEFNLVFDRGTLFGLQSGGRTESILLSMPPLAQWR. 262-264 contacts substrate; sequence GGR.

It belongs to the aerobic coproporphyrinogen-III oxidase family. Homodimer. Requires a divalent metal cation as cofactor.

The protein localises to the cytoplasm. The catalysed reaction is coproporphyrinogen III + O2 + 2 H(+) = protoporphyrinogen IX + 2 CO2 + 2 H2O. Its pathway is porphyrin-containing compound metabolism; protoporphyrin-IX biosynthesis; protoporphyrinogen-IX from coproporphyrinogen-III (O2 route): step 1/1. Functionally, involved in the heme biosynthesis. Catalyzes the aerobic oxidative decarboxylation of propionate groups of rings A and B of coproporphyrinogen-III to yield the vinyl groups in protoporphyrinogen-IX. The protein is Oxygen-dependent coproporphyrinogen-III oxidase of Bordetella pertussis (strain Tohama I / ATCC BAA-589 / NCTC 13251).